The chain runs to 218 residues: Adenylate kinase (218 aa).

10–15 (GAGKGT) is a binding site for ATP. The NMP stretch occupies residues 30–59 (STGDMLRAAVKAGTPLGLEAKAIMDAGGLV). AMP-binding positions include Thr-31, Arg-36, 57–59 (GLV), 85–88 (GFPR), and Gln-92. Positions 122-159 (GRRVHLASGRTYHVTFNPPKAAGKDDVTGEDLVQRDDD) are LID. ATP contacts are provided by residues Arg-123 and 132–133 (TY). The AMP site is built by Arg-156 and Arg-167. Arg-203 contacts ATP.

This sequence belongs to the adenylate kinase family. In terms of assembly, monomer.

The protein localises to the cytoplasm. The catalysed reaction is AMP + ATP = 2 ADP. It participates in purine metabolism; AMP biosynthesis via salvage pathway; AMP from ADP: step 1/1. In terms of biological role, catalyzes the reversible transfer of the terminal phosphate group between ATP and AMP. Plays an important role in cellular energy homeostasis and in adenine nucleotide metabolism. This Chromobacterium violaceum (strain ATCC 12472 / DSM 30191 / JCM 1249 / CCUG 213 / NBRC 12614 / NCIMB 9131 / NCTC 9757 / MK) protein is Adenylate kinase.